The sequence spans 240 residues: Phosphatidylserine decarboxylase proenzyme (240 aa).

Serine 205 serves as the catalytic Schiff-base intermediate with substrate; via pyruvic acid. Position 205 is a pyruvic acid (Ser); by autocatalysis (serine 205).

It belongs to the phosphatidylserine decarboxylase family. PSD-A subfamily. As to quaternary structure, heterodimer of a large membrane-associated beta subunit and a small pyruvoyl-containing alpha subunit. Requires pyruvate as cofactor. Post-translationally, is synthesized initially as an inactive proenzyme. Formation of the active enzyme involves a self-maturation process in which the active site pyruvoyl group is generated from an internal serine residue via an autocatalytic post-translational modification. Two non-identical subunits are generated from the proenzyme in this reaction, and the pyruvate is formed at the N-terminus of the alpha chain, which is derived from the carboxyl end of the proenzyme. The post-translation cleavage follows an unusual pathway, termed non-hydrolytic serinolysis, in which the side chain hydroxyl group of the serine supplies its oxygen atom to form the C-terminus of the beta chain, while the remainder of the serine residue undergoes an oxidative deamination to produce ammonia and the pyruvoyl prosthetic group on the alpha chain.

It is found in the cell membrane. The enzyme catalyses a 1,2-diacyl-sn-glycero-3-phospho-L-serine + H(+) = a 1,2-diacyl-sn-glycero-3-phosphoethanolamine + CO2. It functions in the pathway phospholipid metabolism; phosphatidylethanolamine biosynthesis; phosphatidylethanolamine from CDP-diacylglycerol: step 2/2. Its function is as follows. Catalyzes the formation of phosphatidylethanolamine (PtdEtn) from phosphatidylserine (PtdSer). The chain is Phosphatidylserine decarboxylase proenzyme from Rhodopirellula baltica (strain DSM 10527 / NCIMB 13988 / SH1).